A 558-amino-acid chain; its full sequence is Alpha-1,3-mannosyltransferase MNT2 (558 aa).

At 1–6 (MRRKNR) the chain is on the cytoplasmic side. The chain crosses the membrane as a helical; Signal-anchor for type II membrane protein span at residues 7–27 (LFILVVLLGIVLVVYYSQLNS). The Lumenal segment spans residues 28–558 (LDLVEPVQSS…QIVDIWNKDI (531 aa)). Residue N187 is glycosylated (N-linked (GlcNAc...) asparagine).

Belongs to the MNN1/MNT family.

The protein resides in the golgi apparatus membrane. Its pathway is protein modification; protein glycosylation. Its function is as follows. Mannosyltransferase involved in adding the 4th and 5th mannose residues of O-linked glycans. This chain is Alpha-1,3-mannosyltransferase MNT2 (MNT2), found in Saccharomyces cerevisiae (strain ATCC 204508 / S288c) (Baker's yeast).